We begin with the raw amino-acid sequence, 382 residues long: Enoyl-[acyl-carrier-protein] reductase, mitochondrial (382 aa).

The transit peptide at 1–17 directs the protein to the mitochondrion; it reads MSSFLSKRFLSFSQRAM. The Proton donor role is filled by Tyr77. NADP(+) is bound by residues Asn159, 187 to 190, 210 to 212, 285 to 288, 310 to 312, and Lys375; these read TSSV, RDR, YGGM, and FWV.

The protein belongs to the zinc-containing alcohol dehydrogenase family. Quinone oxidoreductase subfamily. Homodimer.

The protein localises to the mitochondrion matrix. The enzyme catalyses a 2,3-saturated acyl-[ACP] + NADP(+) = a (2E)-enoyl-[ACP] + NADPH + H(+). In terms of biological role, catalyzes the NADPH-dependent reduction of trans-2-enoyl thioesters in mitochondrial fatty acid synthesis (fatty acid synthesis type II). Fatty acid chain elongation in mitochondria uses acyl carrier protein (ACP) as an acyl group carrier, but the enzyme accepts both ACP and CoA thioesters as substrates in vitro. Required for respiration and the maintenance of the mitochondrial compartment. The chain is Enoyl-[acyl-carrier-protein] reductase, mitochondrial (ETR1) from Kluyveromyces lactis (strain ATCC 8585 / CBS 2359 / DSM 70799 / NBRC 1267 / NRRL Y-1140 / WM37) (Yeast).